The following is a 373-amino-acid chain: Glutamine synthetase (373 aa).

Ala-2 is modified (N-acetylalanine). Residues 2–25 (ATSASSHLNKGIKQMYMSLPQGEK) form a required for glutamine-induced ubiquitination by CRL4(CRBN) and proteasomal degradation region. N6-acetyllysine occurs at positions 11 and 14. One can recognise a GS beta-grasp domain in the interval 24-106 (EKVQAMYIWV…VLCEVFKYNR (83 aa)). Residue Tyr-104 is modified to Phosphotyrosine. The region spanning 113 to 373 (LRHICKRIMD…TGDEPFQYKN (261 aa)) is the GS catalytic domain. Glu-134 lines the ATP pocket. The Mn(2+) site is built by Glu-134, Glu-136, Glu-196, and Glu-203. 203–208 (EFQIGP) contributes to the ATP binding site. 246 to 247 (NW) serves as a coordination point for L-glutamate. His-253 serves as a coordination point for Mn(2+). ATP is bound by residues 255-257 (NFS), Arg-319, and Arg-324. Arg-319 is an L-glutamate binding site. Residue 336-338 (YFE) coordinates ADP. Glu-338 lines the Mn(2+) pocket. L-glutamate is bound at residue Arg-340. Ser-343 carries the phosphoserine modification.

Belongs to the glutamine synthetase family. Decamer; composed of two pentamers. Interacts with PALMD. Interacts with RHOJ. Interacts with BEST2; this interaction tethers a fraction of GLUL to the membrane, causing a decrease of cytosolic glutamine synthase (GS) activity and inhibits the chloride channel activity of BEST2 by affecting the gating at the aperture in the absence of intracellular glutamate. Mg(2+) serves as cofactor. The cofactor is Mn(2+). Post-translationally, acetylated by EP300/p300; acetylation is stimulated by increased glutamine levels and promotes ubiquitin-mediated proteasomal degradation. Palmitoylated; undergoes autopalmitoylation. In terms of processing, ubiquitinated by ZNRF1. Ubiquitinated by the DCX (DDB1-CUL4-X-box) E3 ubiquitin-protein ligase complex called CRL4(CRBN), leading to proteasomal degradation. As to expression, expressed in microvascular endothelial cells.

It is found in the cytoplasm. The protein resides in the cytosol. It localises to the microsome. The protein localises to the mitochondrion. Its subcellular location is the cell membrane. The catalysed reaction is L-glutamate + NH4(+) + ATP = L-glutamine + ADP + phosphate + H(+). The enzyme catalyses L-cysteinyl-[protein] + hexadecanoyl-CoA = S-hexadecanoyl-L-cysteinyl-[protein] + CoA. Its activity is regulated as follows. Glutamine synthetase activity is inhibited by methionine sulfoximine (MSO). Its function is as follows. Glutamine synthetase that catalyzes the ATP-dependent conversion of glutamate and ammonia to glutamine. Its role depends on tissue localization: in the brain, it regulates the levels of toxic ammonia and converts neurotoxic glutamate to harmless glutamine, whereas in the liver, it is one of the enzymes responsible for the removal of ammonia. Plays a key role in ammonium detoxification during erythropoiesis: the glutamine synthetase activity is required to remove ammonium generated by porphobilinogen deaminase (HMBS) during heme biosynthesis to prevent ammonium accumulation and oxidative stress. Essential for proliferation of fetal skin fibroblasts. Independently of its glutamine synthetase activity, required for endothelial cell migration during vascular development. Involved in angiogenesis by regulating membrane localization and activation of the GTPase RHOJ, possibly by promoting RHOJ palmitoylation. May act as a palmitoyltransferase for RHOJ: able to autopalmitoylate and then transfer the palmitoyl group to RHOJ. Plays a role in ribosomal 40S subunit biogenesis. Through the interaction with BEST2, inhibits BEST2 channel activity by affecting the gating at the aperture in the absence of intracellular L-glutamate, but sensitizes BEST2 to intracellular L-glutamate, which promotes the opening of BEST2 and thus relieves its inhibitory effect on BEST2. This Mus musculus (Mouse) protein is Glutamine synthetase.